The primary structure comprises 124 residues: Protein MGF 110-8L (124 aa).

A signal peptide spans 1 to 16; that stretch reads MKVLILVLLGVVILQA. A glycan (N-linked (GlcNAc...) asparagine; by host) is linked at Asn-76.

Belongs to the asfivirus MGF 110 family.

In terms of biological role, plays a role in virus cell tropism, and may be required for efficient virus replication in macrophages. This is Protein MGF 110-8L from African swine fever virus (isolate Warthog/Namibia/Wart80/1980) (ASFV).